The following is a 264-amino-acid chain: Carbonic anhydrase 7 (264 aa).

One can recognise an Alpha-carbonic anhydrase domain in the interval 5–262 (HCWGYGQDDG…LKGRVVKASF (258 aa)). Histidine 66 functions as the Proton donor/acceptor in the catalytic mechanism. The Zn(2+) site is built by histidine 96, histidine 98, and histidine 121. 201–202 (TT) contributes to the substrate binding site.

The protein belongs to the alpha-carbonic anhydrase family. Requires Zn(2+) as cofactor.

The protein localises to the cytoplasm. The catalysed reaction is hydrogencarbonate + H(+) = CO2 + H2O. Reversible hydration of carbon dioxide. The chain is Carbonic anhydrase 7 (Ca7) from Mus musculus (Mouse).